A 262-amino-acid chain; its full sequence is Cytochrome c oxidase subunit 3 (262 aa).

6 consecutive transmembrane segments (helical) span residues 39-59 (YDIS…YQWW), 83-103 (GMIL…WAFF), 120-140 (MGII…ILLA), 163-183 (GLFF…YEYI), 198-218 (FFMA…FLLV), and 240-260 (AWYW…IYWW).

The protein belongs to the cytochrome c oxidase subunit 3 family. Component of the cytochrome c oxidase (complex IV, CIV), a multisubunit enzyme composed of a catalytic core of 3 subunits and several supernumerary subunits. The complex exists as a monomer or a dimer and forms supercomplexes (SCs) in the inner mitochondrial membrane with ubiquinol-cytochrome c oxidoreductase (cytochrome b-c1 complex, complex III, CIII).

It is found in the mitochondrion inner membrane. It carries out the reaction 4 Fe(II)-[cytochrome c] + O2 + 8 H(+)(in) = 4 Fe(III)-[cytochrome c] + 2 H2O + 4 H(+)(out). Functionally, component of the cytochrome c oxidase, the last enzyme in the mitochondrial electron transport chain which drives oxidative phosphorylation. The respiratory chain contains 3 multisubunit complexes succinate dehydrogenase (complex II, CII), ubiquinol-cytochrome c oxidoreductase (cytochrome b-c1 complex, complex III, CIII) and cytochrome c oxidase (complex IV, CIV), that cooperate to transfer electrons derived from NADH and succinate to molecular oxygen, creating an electrochemical gradient over the inner membrane that drives transmembrane transport and the ATP synthase. Cytochrome c oxidase is the component of the respiratory chain that catalyzes the reduction of oxygen to water. Electrons originating from reduced cytochrome c in the intermembrane space (IMS) are transferred via the dinuclear copper A center (CU(A)) of subunit 2 and heme A of subunit 1 to the active site in subunit 1, a binuclear center (BNC) formed by heme A3 and copper B (CU(B)). The BNC reduces molecular oxygen to 2 water molecules using 4 electrons from cytochrome c in the IMS and 4 protons from the mitochondrial matrix. This Drosophila melanogaster (Fruit fly) protein is Cytochrome c oxidase subunit 3 (mt:CoIII).